The sequence spans 300 residues: Acetyl-coenzyme A carboxylase carboxyl transferase subunit beta 2 (300 aa).

One can recognise a CoA carboxyltransferase N-terminal domain in the interval 26–294 (VWIKCPSCRE…ATAHKSEPIV (269 aa)). Zn(2+) is bound by residues cysteine 30, cysteine 33, cysteine 49, and cysteine 51. The segment at 30–51 (CPSCRELIYHKQLAERMKVCRC) adopts a C4-type zinc-finger fold.

The protein belongs to the AccD/PCCB family. Acetyl-CoA carboxylase is a heterohexamer composed of biotin carboxyl carrier protein (AccB), biotin carboxylase (AccC) and two subunits each of ACCase subunit alpha (AccA) and ACCase subunit beta (AccD). Zn(2+) is required as a cofactor.

It is found in the cytoplasm. It carries out the reaction N(6)-carboxybiotinyl-L-lysyl-[protein] + acetyl-CoA = N(6)-biotinyl-L-lysyl-[protein] + malonyl-CoA. It participates in lipid metabolism; malonyl-CoA biosynthesis; malonyl-CoA from acetyl-CoA: step 1/1. Its function is as follows. Component of the acetyl coenzyme A carboxylase (ACC) complex. Biotin carboxylase (BC) catalyzes the carboxylation of biotin on its carrier protein (BCCP) and then the CO(2) group is transferred by the transcarboxylase to acetyl-CoA to form malonyl-CoA. This Roseiflexus sp. (strain RS-1) protein is Acetyl-coenzyme A carboxylase carboxyl transferase subunit beta 2.